The chain runs to 496 residues: Transcription factor CP2 (496 aa).

In terms of domain architecture, Grh/CP2 DB spans 61–300 (ENKILPFQYV…SPGFNSSHSS (240 aa)). Residues 133-386 (EHQQLEGWRW…LFNALKGRMV (254 aa)) are DNA-binding. 2 disordered regions span residues 238-268 (FKPK…YQPS) and 296-327 (SSHS…LLPT). Over residues 241-265 (KGADRKQKTDREKMEKRTPHEKEKY) the composition is skewed to basic and acidic residues.

It belongs to the grh/CP2 family. CP2 subfamily. Component of the SSP (stage selector protein) complex, which appears to be a heteromer of TFCP2 and 2 copies of NFE4. Expressed in the epiblast at the pre-primitive streak stage. At the primitive streak stage, expressed in the extending primitive streak and in the prospective neural plate. At stages 7 and 8, expressed in the neural folds, somites and in the regressing primitive streak. At stage 12, ubiquitously expressed in the whole embryo.

Its subcellular location is the nucleus. Binds the B-response element 5'-CAAGTCCAGGCAAGT-3' of the ENS1/ERNI promoter. May be the major transcription activator thus being essential for its expression. This Gallus gallus (Chicken) protein is Transcription factor CP2 (TFCP2).